Reading from the N-terminus, the 437-residue chain is Serine carboxypeptidase-like 9 (437 aa).

The signal sequence occupies residues 1-21 (MSLILKFMLLILLVSSHHVRS). N-linked (GlcNAc...) asparagine glycosylation is present at asparagine 101. Serine 175 is an active-site residue. Cystine bridges form between cysteine 243/cysteine 257 and cysteine 281/cysteine 293. N-linked (GlcNAc...) asparagine glycosylation is found at asparagine 307 and asparagine 346. The active site involves aspartate 362. An N-linked (GlcNAc...) asparagine glycan is attached at asparagine 378. Residue histidine 415 is part of the active site.

It belongs to the peptidase S10 family. Expressed in seedlings, leaves, flowers and siliques.

The protein resides in the secreted. It carries out the reaction 2 1-O-(trans-sinapoyl)-beta-D-glucose = 1,2-di-O-sinapoyl beta-D-glucose + D-glucose. Catalyzes the formation of 1,2-bis-O-sinapoyl beta-D-glucoside and an unidentified compound 1. This Arabidopsis thaliana (Mouse-ear cress) protein is Serine carboxypeptidase-like 9 (SCPL9).